The sequence spans 198 residues: Recombination protein RecR (198 aa).

The C4-type zinc-finger motif lies at 56–71; it reads CTECRDFSETKICAIC. In terms of domain architecture, Toprim spans 79-174; it reads HQLCVVESPP…RPSRLAQGLP (96 aa).

This sequence belongs to the RecR family.

Its function is as follows. May play a role in DNA repair. It seems to be involved in an RecBC-independent recombinational process of DNA repair. It may act with RecF and RecO. The sequence is that of Recombination protein RecR from Xylella fastidiosa (strain 9a5c).